We begin with the raw amino-acid sequence, 409 residues long: Arginine biosynthesis bifunctional protein ArgJ (409 aa).

T157, K183, T194, E281, N404, and S409 together coordinate substrate. T194 (nucleophile) is an active-site residue.

Belongs to the ArgJ family. In terms of assembly, heterotetramer of two alpha and two beta chains.

It localises to the cytoplasm. It carries out the reaction N(2)-acetyl-L-ornithine + L-glutamate = N-acetyl-L-glutamate + L-ornithine. It catalyses the reaction L-glutamate + acetyl-CoA = N-acetyl-L-glutamate + CoA + H(+). It functions in the pathway amino-acid biosynthesis; L-arginine biosynthesis; L-ornithine and N-acetyl-L-glutamate from L-glutamate and N(2)-acetyl-L-ornithine (cyclic): step 1/1. Its pathway is amino-acid biosynthesis; L-arginine biosynthesis; N(2)-acetyl-L-ornithine from L-glutamate: step 1/4. Catalyzes two activities which are involved in the cyclic version of arginine biosynthesis: the synthesis of N-acetylglutamate from glutamate and acetyl-CoA as the acetyl donor, and of ornithine by transacetylation between N(2)-acetylornithine and glutamate. This chain is Arginine biosynthesis bifunctional protein ArgJ, found in Zymomonas mobilis subsp. mobilis (strain ATCC 31821 / ZM4 / CP4).